A 247-amino-acid polypeptide reads, in one-letter code: 3,4-dihydroxy-2-butanone 4-phosphate synthase (247 aa).

D-ribulose 5-phosphate-binding positions include arginine 38 to glutamate 39, aspartate 43, arginine 179 to threonine 183, and glutamate 203. Glutamate 39 lines the Mg(2+) pocket.

Belongs to the DHBP synthase family. As to quaternary structure, homodimer. Mg(2+) serves as cofactor. Mn(2+) is required as a cofactor.

It carries out the reaction D-ribulose 5-phosphate = (2S)-2-hydroxy-3-oxobutyl phosphate + formate + H(+). It participates in cofactor biosynthesis; riboflavin biosynthesis; 2-hydroxy-3-oxobutyl phosphate from D-ribulose 5-phosphate: step 1/1. In terms of biological role, catalyzes the conversion of D-ribulose 5-phosphate to formate and 3,4-dihydroxy-2-butanone 4-phosphate. The polypeptide is 3,4-dihydroxy-2-butanone 4-phosphate synthase (Methanosarcina mazei (strain ATCC BAA-159 / DSM 3647 / Goe1 / Go1 / JCM 11833 / OCM 88) (Methanosarcina frisia)).